The sequence spans 487 residues: Alpha-1,4-L-rhamnosidase (487 aa).

The first 30 residues, 1–30 (MKNKKRLCHILKYIITCFLFGVIFIIPIQA), serve as a signal peptide directing secretion. Catalysis depends on Glu-199, which acts as the Proton donor.

It belongs to the glycosyl hydrolase 39 family.

The protein resides in the periplasm. Functionally, alpha-rhamnosidase involved in ulvan degradation. Ulvan is the main polysaccharide component of the Ulvales (green seaweed) cell wall. It is composed of disaccharide building blocks comprising 3-sulfated rhamnose (Rha3S) linked to D-glucuronic acid (GlcA), L-iduronic acid (IduA), or D-xylose (Xyl). Endo-acting alpha-1,4-L-rhamnosidase cleaves rhamnose sections interspersed between xylose residues within the polymer, degrading larger oligomers with consecutive Xyl-Rha3S units that are resistant to the ulvan lyases and producing dimers Xyl-Rha3S and Xyl2S-Rha3S as the smallest products. This Formosa agariphila (strain DSM 15362 / KCTC 12365 / LMG 23005 / KMM 3901 / M-2Alg 35-1) protein is Alpha-1,4-L-rhamnosidase.